The following is a 237-amino-acid chain: Histone H1E (237 aa).

Positions methionine 1–proline 21 are enriched in low complexity. Disordered regions lie at residues methionine 1–glutamate 56 and leucine 109–lysine 237. A compositionally biased stretch (basic and acidic residues) spans glutamate 26 to proline 42. In terms of domain architecture, H15 spans threonine 50–proline 124. Residues alanine 182–lysine 195 show a composition bias toward low complexity. Over residues proline 200–glutamate 209 the composition is skewed to basic and acidic residues. Over residues alanine 210 to lysine 237 the composition is skewed to basic residues.

Belongs to the histone H1/H5 family.

Its subcellular location is the nucleus. The protein resides in the chromosome. Its function is as follows. Histones H1 are necessary for the condensation of nucleosome chains into higher-order structures. This is Histone H1E from Chironomus tentans (Midge).